The chain runs to 244 residues: Guanine nucleotide exchange factor rei-1 (244 aa).

2 coiled-coil regions span residues 6–39 (DQLISIRKQLENLNNATDDINSYEMKLETVKKQF) and 81–144 (VQQA…KAEK). The segment at 221–244 (DQIHQERSSQSSLAPSSDAESDSS) is disordered. The span at 228-238 (SSQSSLAPSSD) shows a compositional bias: low complexity.

Belongs to the SH3BP5 family. Homodimer, tetramer and multimer. Interacts with rab-11.1. Binds preferentially to the GDP-bound form of rab-11.1. As to expression, expressed in germ cells.

The protein resides in the cytoplasmic granule. The protein localises to the golgi apparatus membrane. In terms of biological role, guanine nucleotide exchange factor for Rab GTPase Rab-11.1. Spatially and temporally regulates the distribution of Rab-11.1 to target membranes during embryogenesis. Plays a role in cytokinesis, probably by targeting rab-11.1 to the cleavage furrows. The chain is Guanine nucleotide exchange factor rei-1 from Caenorhabditis elegans.